Reading from the N-terminus, the 387-residue chain is MEQLKEGNSYFVDEQYDEALKCYDKACLELSNNAEAFFKRSQCHSKLSNLKEALSDINTSIKLDSNNSKYYLKKGQLCFELEEFDTALKTFEKGQSIDSENSSFKTWIRKSKAEIQSNPTTTTTTTPTPTPTPTPAPQPVTTTTNPTPIPTTSNTTTTTNNNNNNNNNNNNNNNNNNTTTDSTTTKLPIPSSGNKVRHEWYQTETHVVLTIFAKFVTASNSKINLTSKSVNISFPLANGSEFLFEMDLFDPIVDKDSTIHYYSTKVEIKMKKSRAIKWDTLEFTDKSGPVGLMDQISSSPAVPSPYASKKDWDKLPNEPEEKLEGDQALNKIFRDIFSKGSEDQQRAMMKSFTESGGTVLSTNWDEVGSKKVVGEPPKGLEFKQYEK.

TPR repeat units lie at residues 1–34, 36–67, and 68–101; these read MEQL…SNNA, AFFK…DSNN, and SKYY…DSEN. Disordered stretches follow at residues 110–193 and 299–323; these read KSKA…PSSG and SPAV…EEKL. Over residues 118–127 the composition is skewed to low complexity; it reads NPTTTTTTTP. Residues 128–138 show a composition bias toward pro residues; that stretch reads TPTPTPTPAPQ. Residues 139–185 show a composition bias toward low complexity; that stretch reads PVTTTTNPTPIPTTSNTTTTTNNNNNNNNNNNNNNNNNNTTTDSTTT. Residues 193 to 282 enclose the CS domain; sequence GNKVRHEWYQ…SRAIKWDTLE (90 aa). The SGS domain occupies 301-387; the sequence is AVPSPYASKK…KGLEFKQYEK (87 aa). Basic and acidic residues predominate over residues 308-323; sequence SKKDWDKLPNEPEEKL.

The protein belongs to the SGT1 family.

Its function is as follows. May play a role in ubiquitination and subsequent proteasomal degradation of target proteins. This Dictyostelium discoideum (Social amoeba) protein is Protein SGT1 homolog (sugt1).